The chain runs to 2339 residues: Inverse autotransporter adhesin YeeJ (2339 aa).

The N-terminal stretch at 1-26 (MGIKLRRLTAGICLITQLAFPMAAAA) is a signal peptide. The region spanning 50-98 (VPYTLGALESAQSVAERFGISVAELRKLNQFRTFARGFDNVRQGDELDV) is the LysM domain. The interval 125-400 (TSQQIGSLLA…SRYDLVDRNN (276 aa)) is inverse autotransporter. Residues 513–605 (QKDSSVSLST…GVDAAKAPAV (93 aa)) are invasin 3 domain. Big-1 domains follow at residues 721–815 (IATL…VSFV), 822–913 (QVDL…VNFI), 920–1017 (ALTL…MTFV), 1024–1121 (VVVL…VTFV), 1128–1221 (QVVL…VHFI), 1229–1331 (IIEL…SINV), 1339–1432 (HLTL…VTYV), 1439–1535 (EITL…VNFI), 1542–1639 (QVNL…VTLI), 1646–1730 (KLAS…PTEV), 1746–1837 (ITSL…LEAI), 1840–1934 (KLTL…VKVT), and 1942–2034 (VASF…ITLV). The segment at 2236-2339 (KSWWVNAGEA…FAYATCYKNL (104 aa)) is C-type lectin domain.

It belongs to the intimin/invasin family.

The protein localises to the cell outer membrane. Functionally, a cryptic inverse autotransporter, it is not expressed in wild-type strain MG1655. Upon overexpression shows increased adherence to polyvinyl chloride (PVC) plates and increased mature biofilm formation. Probably binds peptidoglycan. The chain is Inverse autotransporter adhesin YeeJ (yeeJ) from Escherichia coli (strain K12).